The sequence spans 205 residues: Ribosomal RNA large subunit methyltransferase E (205 aa).

Residues G60, W62, D80, D96, and D121 each contribute to the S-adenosyl-L-methionine site. The Proton acceptor role is filled by K161.

This sequence belongs to the class I-like SAM-binding methyltransferase superfamily. RNA methyltransferase RlmE family.

Its subcellular location is the cytoplasm. It catalyses the reaction uridine(2552) in 23S rRNA + S-adenosyl-L-methionine = 2'-O-methyluridine(2552) in 23S rRNA + S-adenosyl-L-homocysteine + H(+). Its function is as follows. Specifically methylates the uridine in position 2552 of 23S rRNA at the 2'-O position of the ribose in the fully assembled 50S ribosomal subunit. The protein is Ribosomal RNA large subunit methyltransferase E of Azoarcus sp. (strain BH72).